We begin with the raw amino-acid sequence, 424 residues long: 3-phosphoshikimate 1-carboxyvinyltransferase (424 aa).

3-phosphoshikimate-binding residues include K21, S22, and R26. A phosphoenolpyruvate-binding site is contributed by K21. Residues G91 and R119 each contribute to the phosphoenolpyruvate site. The 3-phosphoshikimate site is built by S164, Q166, D310, and K337. Position 166 (Q166) interacts with phosphoenolpyruvate. D310 acts as the Proton acceptor in catalysis. Phosphoenolpyruvate is bound by residues R341 and R382.

This sequence belongs to the EPSP synthase family. As to quaternary structure, monomer.

The protein localises to the cytoplasm. It carries out the reaction 3-phosphoshikimate + phosphoenolpyruvate = 5-O-(1-carboxyvinyl)-3-phosphoshikimate + phosphate. It participates in metabolic intermediate biosynthesis; chorismate biosynthesis; chorismate from D-erythrose 4-phosphate and phosphoenolpyruvate: step 6/7. In terms of biological role, catalyzes the transfer of the enolpyruvyl moiety of phosphoenolpyruvate (PEP) to the 5-hydroxyl of shikimate-3-phosphate (S3P) to produce enolpyruvyl shikimate-3-phosphate and inorganic phosphate. The polypeptide is 3-phosphoshikimate 1-carboxyvinyltransferase (Campylobacter curvus (strain 525.92)).